Here is a 437-residue protein sequence, read N- to C-terminus: Protein translocase subunit SecY (437 aa).

10 helical membrane passes run 23-43, 77-97, 125-145, 154-174, 183-203, 217-237, 271-291, 315-335, 367-387, and 395-415; these read IVFL…PIPG, IFAL…LLTL, LILA…IAGI, FYFY…LMWL, IGNG…PSAI, ILLF…VVFM, MAGV…ATII, YLIL…GLVF, IMLR…LIPE, and VPFY…IDFI.

The protein belongs to the SecY/SEC61-alpha family. In terms of assembly, component of the Sec protein translocase complex. Heterotrimer consisting of SecY, SecE and SecG subunits. The heterotrimers can form oligomers, although 1 heterotrimer is thought to be able to translocate proteins. Interacts with the ribosome. Interacts with SecDF, and other proteins may be involved. Interacts with SecA.

Its subcellular location is the cell membrane. Functionally, the central subunit of the protein translocation channel SecYEG. Consists of two halves formed by TMs 1-5 and 6-10. These two domains form a lateral gate at the front which open onto the bilayer between TMs 2 and 7, and are clamped together by SecE at the back. The channel is closed by both a pore ring composed of hydrophobic SecY resides and a short helix (helix 2A) on the extracellular side of the membrane which forms a plug. The plug probably moves laterally to allow the channel to open. The ring and the pore may move independently. This is Protein translocase subunit SecY from Buchnera aphidicola subsp. Acyrthosiphon pisum (strain APS) (Acyrthosiphon pisum symbiotic bacterium).